The following is a 106-amino-acid chain: Vacuolar ATPase assembly integral membrane protein VMA21 homolog (106 aa).

The tract at residues 1 to 26 (MSNKNKKSGGAGNGAAQKQTRQQSHD) is disordered. The Cytoplasmic segment spans residues 1 to 32 (MSNKNKKSGGAGNGAAQKQTRQQSHDSQDYSS). Residues 33 to 53 (FKIVLFYCMLIVFLPVVTFFL) traverse the membrane as a helical segment. At 54-69 (LKGFVLDRFFSLSEVK) the chain is on the lumenal side. A helical transmembrane segment spans residues 70–90 (VNIASAVGAVVSLHIALGLYI). The Cytoplasmic segment spans residues 91–106 (YRAYFGATGSKAVKED).

This sequence belongs to the VMA21 family.

The protein localises to the endoplasmic reticulum membrane. It localises to the endoplasmic reticulum-Golgi intermediate compartment membrane. Its subcellular location is the cytoplasmic vesicle. The protein resides in the COPII-coated vesicle membrane. Functionally, required for the assembly of the V0 complex of the vacuolar ATPase (V-ATPase) in the endoplasmic reticulum. This chain is Vacuolar ATPase assembly integral membrane protein VMA21 homolog, found in Drosophila ananassae (Fruit fly).